A 35-amino-acid chain; its full sequence is Photosystem II reaction center protein T (35 aa).

The helical transmembrane segment at 3–23 threads the bilayer; the sequence is ALVYTFLLVSTLGIIFFAIFF.

This sequence belongs to the PsbT family. In terms of assembly, PSII is composed of 1 copy each of membrane proteins PsbA, PsbB, PsbC, PsbD, PsbE, PsbF, PsbH, PsbI, PsbJ, PsbK, PsbL, PsbM, PsbT, PsbY, PsbZ, Psb30/Ycf12, at least 3 peripheral proteins of the oxygen-evolving complex and a large number of cofactors. It forms dimeric complexes.

The protein resides in the plastid. Its subcellular location is the chloroplast thylakoid membrane. Found at the monomer-monomer interface of the photosystem II (PS II) dimer, plays a role in assembly and dimerization of PSII. PSII is a light-driven water plastoquinone oxidoreductase, using light energy to abstract electrons from H(2)O, generating a proton gradient subsequently used for ATP formation. The chain is Photosystem II reaction center protein T from Bassia hyssopifolia (Fivehorn smotherweed).